We begin with the raw amino-acid sequence, 101 residues long: Small ribosomal subunit protein uS14A (101 aa).

Residues isoleucine 31–arginine 69 form a disordered region. Over residues proline 38–arginine 53 the composition is skewed to basic and acidic residues.

It belongs to the universal ribosomal protein uS14 family. In terms of assembly, part of the 30S ribosomal subunit. Contacts proteins S3 and S10.

In terms of biological role, binds 16S rRNA, required for the assembly of 30S particles and may also be responsible for determining the conformation of the 16S rRNA at the A site. The protein is Small ribosomal subunit protein uS14A of Saccharopolyspora erythraea (strain ATCC 11635 / DSM 40517 / JCM 4748 / NBRC 13426 / NCIMB 8594 / NRRL 2338).